Here is a 104-residue protein sequence, read N- to C-terminus: NADH-quinone oxidoreductase subunit K (104 aa).

Helical transmembrane passes span 4–24, 31–51, and 67–87; these read VPAS…LFGA, VIVL…FVAF, and LFTM…LIAL.

This sequence belongs to the complex I subunit 4L family. As to quaternary structure, NDH-1 is composed of 14 different subunits. Subunits NuoA, H, J, K, L, M, N constitute the membrane sector of the complex.

It is found in the cell membrane. It catalyses the reaction a quinone + NADH + 5 H(+)(in) = a quinol + NAD(+) + 4 H(+)(out). In terms of biological role, NDH-1 shuttles electrons from NADH, via FMN and iron-sulfur (Fe-S) centers, to quinones in the respiratory chain. The immediate electron acceptor for the enzyme in this species is believed to be a menaquinone. Couples the redox reaction to proton translocation (for every two electrons transferred, four hydrogen ions are translocated across the cytoplasmic membrane), and thus conserves the redox energy in a proton gradient. This chain is NADH-quinone oxidoreductase subunit K, found in Bacillus anthracis (strain A0248).